The following is a 147-amino-acid chain: D-aminoacyl-tRNA deacylase (147 aa).

Positions 137 to 138 match the Gly-cisPro motif, important for rejection of L-amino acids motif; that stretch reads GP.

It belongs to the DTD family. As to quaternary structure, homodimer.

It is found in the cytoplasm. The catalysed reaction is glycyl-tRNA(Ala) + H2O = tRNA(Ala) + glycine + H(+). The enzyme catalyses a D-aminoacyl-tRNA + H2O = a tRNA + a D-alpha-amino acid + H(+). Functionally, an aminoacyl-tRNA editing enzyme that deacylates mischarged D-aminoacyl-tRNAs. Also deacylates mischarged glycyl-tRNA(Ala), protecting cells against glycine mischarging by AlaRS. Acts via tRNA-based rather than protein-based catalysis; rejects L-amino acids rather than detecting D-amino acids in the active site. By recycling D-aminoacyl-tRNA to D-amino acids and free tRNA molecules, this enzyme counteracts the toxicity associated with the formation of D-aminoacyl-tRNA entities in vivo and helps enforce protein L-homochirality. The protein is D-aminoacyl-tRNA deacylase of Bacillus licheniformis (strain ATCC 14580 / DSM 13 / JCM 2505 / CCUG 7422 / NBRC 12200 / NCIMB 9375 / NCTC 10341 / NRRL NRS-1264 / Gibson 46).